Reading from the N-terminus, the 2222-residue chain is Voltage-dependent R-type calcium channel subunit alpha-1E (2222 aa).

At 1-40 (MALYNPIPVRQNCFTVNRSLFIFGEDNIVRKYAKKLIDWP) the chain is on the cytoplasmic side. An I repeat occupies 27-305 (NIVRKYAKKL…LVLGVLSGEF (279 aa)). Residues 41–59 (PFEYMILATIIANCIVLAL) traverse the membrane as a helical segment. The Extracellular segment spans residues 60 to 78 (EQHLPEDDKTPMSRRLEKT). The helical transmembrane segment at 79–97 (EPYFIGIFCFEAGIKIVAL) threads the bilayer. The Cytoplasmic portion of the chain corresponds to 98-109 (GFIFHKGSYLRN). The helical transmembrane segment at 110–124 (GWNVMDFIVVLSGIL) threads the bilayer. Over 125-136 (ATAGTHFNTHVD) the chain is Extracellular. A helical transmembrane segment spans residues 137–156 (LRTLRAVRVLRPLKLVSGIP). The Cytoplasmic segment spans residues 157-174 (SLQIVLKSIMKAMVPLLQ). The chain crosses the membrane as a helical span at residues 175–195 (IGLLLFFAILMFAIIGLEFYS). Topologically, residues 196-277 (GKLHRACFMN…NTNDALGATW (82 aa)) are extracellular. A glycan (N-linked (GlcNAc...) asparagine) is linked at Asn-205. Residues 278 to 301 (NWLYFIPLIIIGSFFVLNLVLGVL) traverse the membrane as a helical segment. Residues 302–427 (SGEFAKERER…ISIRHMVKSQ (126 aa)) are Cytoplasmic-facing. Positions 325 to 342 (QQIERELNGYRAWIDKAE) are binding to the beta subunit. A Ca(2+)-binding site is contributed by Asp-377. A Phosphoserine modification is found at Ser-378. 3 residues coordinate Ca(2+): Ser-379, Glu-381, and Cys-383. Thr-391 carries the phosphothreonine modification. The II repeat unit spans residues 413–657 (ERLLRISIRH…VFLAIAVDNL (245 aa)). The chain crosses the membrane as a helical span at residues 428–447 (VFYWIVLSVVALNTACVAIV). The Extracellular segment spans residues 448-460 (HHNQPQWLTHLLY). Residues 461–480 (YAEFLFLGLFLLEMSLKMYG) form a helical membrane-spanning segment. Topologically, residues 481–489 (MGPRLYFHS) are cytoplasmic. Residues 490–508 (SFNCFDFGVTVGSIFEVVW) form a helical membrane-spanning segment. At 509–518 (AIFRPGTSFG) the chain is on the extracellular side. The chain crosses the membrane as a helical span at residues 519–537 (ISVLRALRLLRIFKITKYW). The Cytoplasmic segment spans residues 538–556 (ASLRNLVVSLMSSMKSIIS). A helical transmembrane segment spans residues 557–576 (LLFLLFLFIVVFALLGMQLF). Over 577 to 629 (GGRFNFNDGTPSANFDTFPAAIMTVFQILTGEDWNEVMYNGIRSQGGVSSGMW) the chain is Extracellular. A helical membrane pass occupies residues 630–654 (SAIYFIVLTLFGNYTLLNVFLAIAV). The Cytoplasmic segment spans residues 655–1100 (DNLANAQELT…TNPIRKACHY (446 aa)). A disordered region spans residues 680–727 (LQKAKEVSPMSAPNMPSIERDRRRRHHMSMWEPRSSHLRERRRRHHMS). Phosphoserine occurs at positions 687, 696, 744, 766, and 806. Disordered regions lie at residues 820–944 (NQRS…VPRG) and 1042–1076 (NKTD…RETG). The segment covering 864–877 (RHRQSQRRSRHRRV) has biased composition (basic residues). The span at 884-896 (SASASRSRSASQE) shows a compositional bias: low complexity. Position 898 is a phosphoserine (Ser-898). 2 stretches are compositionally biased toward basic and acidic residues: residues 906–935 (DGEK…DLRR) and 1044–1055 (TDGEASPLKEAE). Phosphoserine is present on Ser-1049. The III repeat unit spans residues 1092 to 1378 (NPIRKACHYI…IFVALIIITF (287 aa)). Residues 1101–1117 (IVNLRYFEMCILLVIAA) traverse the membrane as a helical segment. At 1118–1141 (SSIALAAEDPVLTNSERNKVLRYF) the chain is on the extracellular side. A helical membrane pass occupies residues 1142–1161 (DYVFTGVFTFEMVIKMIDQG). At 1162 to 1169 (LILQDGSY) the chain is on the cytoplasmic side. Residues 1170–1192 (FRDLWNILDFVVVVGALVAFALA) traverse the membrane as a helical segment. Residues 1193–1206 (NALGTNKGRDIKTI) lie on the Extracellular side of the membrane. Residues 1207 to 1224 (KSLRVLRVLRPLKTIKRL) form a helical membrane-spanning segment. Topologically, residues 1225-1243 (PKLKAVFDCVVTSLKNVFN) are cytoplasmic. Residues 1244 to 1263 (ILIVYKLFMFIFAVIAVQLF) form a helical membrane-spanning segment. Over 1264–1350 (KGKFFYCTDS…RGPSRSNRME (87 aa)) the chain is Extracellular. A helical membrane pass occupies residues 1351–1374 (MSIFYVVYFVVFPFFFVNIFVALI). Topologically, residues 1375–1431 (IITFQEQGDKMMEECSLEKNERACIDFAISAKPLTRYMPQNRHTFQYRVWHFVVSPS) are cytoplasmic. An IV repeat occupies 1415–1678 (NRHTFQYRVW…LFVAVIMDNF (264 aa)). The chain crosses the membrane as a helical span at residues 1432–1450 (FEYTIMAMIALNTVVLMMK). Topologically, residues 1451 to 1467 (YYSAPWTYELALKYLNI) are extracellular. The helical transmembrane segment at 1468-1485 (AFTMVFSLECVLKVIAFG) threads the bilayer. Residues 1486–1493 (FLNYFRDT) are Cytoplasmic-facing. Residues 1494–1512 (WNIFDFITVIGSITEIILT) traverse the membrane as a helical segment. Residues 1513-1523 (DSKLVNTSGFN) are Extracellular-facing. Residues Asn-1518 and Asn-1523 are each glycosylated (N-linked (GlcNAc...) asparagine). A helical membrane pass occupies residues 1524–1542 (MSFLKLFRAARLIKLLRQG). Residues 1543–1561 (YTIRILLWTFVQSFKALPY) are Cytoplasmic-facing. The chain crosses the membrane as a helical span at residues 1562-1581 (VCLLIAMLFFIYAIIGMQVF). Residues 1582-1650 (GNIKLDEESH…NESERCGTDL (69 aa)) lie on the Extracellular side of the membrane. Asn-1641 carries an N-linked (GlcNAc...) asparagine glycan. Residues 1651–1676 (AYVYFVSFIFFCSFLMLNLFVAVIMD) traverse the membrane as a helical segment. The Cytoplasmic segment spans residues 1677 to 2222 (NFEYLTRDSS…LSDTEEDDKC (546 aa)). The EF-hand domain maps to 1691-1726 (HHLDEFVRVWAEYDRAACGRIHYTEMYEMLTLMSPP). 3 residues coordinate Ca(2+): Asp-1704, Arg-1710, and Glu-1715. The disordered stretch occupies residues 1970–2135 (SAHRLNSDSG…QQGQHPSPQH (166 aa)). The span at 1974 to 1994 (LNSDSGHKSDTHRSGGRERGR) shows a compositional bias: basic and acidic residues. Phosphoserine is present on residues Ser-2003 and Ser-2022. The segment covering 2010–2027 (NSEERGTQADWESPERRQ) has biased composition (basic and acidic residues). Positions 2046 to 2061 (SLSESSIPSISDTSTP) are enriched in low complexity. Positions 2104-2123 (LASQALESNSACLTESSNSL) are enriched in polar residues. Residues 2124–2135 (HPQQGQHPSPQH) are compositionally biased toward low complexity.

This sequence belongs to the calcium channel alpha-1 subunit (TC 1.A.1.11) family. CACNA1E subfamily. As to quaternary structure, interacts with EFHC1. Voltage-dependent calcium channels are multisubunit complexes, consisting of alpha-1, alpha-2, beta and delta subunits in a 1:1:1:1 ratio. The channel activity is directed by the pore-forming and voltage-sensitive alpha-1 subunit. In many cases, this subunit is sufficient to generate voltage-sensitive calcium channel activity. The auxiliary subunits beta and alpha-2/delta linked by a disulfide bridge regulate the channel activity. In terms of tissue distribution, expressed in central nervous system and in insulinoma.

The protein localises to the membrane. It carries out the reaction Ca(2+)(in) = Ca(2+)(out). Its function is as follows. Voltage-sensitive calcium channels (VSCC) mediate the entry of calcium ions into excitable cells and are also involved in a variety of calcium-dependent processes, including muscle contraction, hormone or neurotransmitter release, gene expression, cell motility, cell division and cell death. The isoform alpha-1E gives rise to R-type calcium currents. R-type calcium channels belong to the 'high-voltage activated' (HVA) group and are blocked by nickel. They are however insensitive to dihydropyridines (DHP). Calcium channels containing alpha-1E subunit could be involved in the modulation of firing patterns of neurons which is important for information processing. The polypeptide is Voltage-dependent R-type calcium channel subunit alpha-1E (Cacna1e) (Rattus norvegicus (Rat)).